A 219-amino-acid polypeptide reads, in one-letter code: Holliday junction branch migration complex subunit RuvA (219 aa).

The segment at 1-71 (MISWIKGELV…EDSDMLFGFS (71 aa)) is domain I. A domain II region spans residues 72–150 (TKDQRDFFIQ…NKEIEKENLN (79 aa)). A flexible linker region spans residues 151–161 (INNFLEKNKDL). Residues 161–219 (LDSIFKDIDLTLQSLNYSKKEIKNLFPKLINNIKNSSLEKESISFENLLKEAMNYLDHK) are domain III.

This sequence belongs to the RuvA family. In terms of assembly, homotetramer. Forms an RuvA(8)-RuvB(12)-Holliday junction (HJ) complex. HJ DNA is sandwiched between 2 RuvA tetramers; dsDNA enters through RuvA and exits via RuvB. An RuvB hexamer assembles on each DNA strand where it exits the tetramer. Each RuvB hexamer is contacted by two RuvA subunits (via domain III) on 2 adjacent RuvB subunits; this complex drives branch migration. In the full resolvosome a probable DNA-RuvA(4)-RuvB(12)-RuvC(2) complex forms which resolves the HJ.

The protein localises to the cytoplasm. Its function is as follows. The RuvA-RuvB-RuvC complex processes Holliday junction (HJ) DNA during genetic recombination and DNA repair, while the RuvA-RuvB complex plays an important role in the rescue of blocked DNA replication forks via replication fork reversal (RFR). RuvA specifically binds to HJ cruciform DNA, conferring on it an open structure. The RuvB hexamer acts as an ATP-dependent pump, pulling dsDNA into and through the RuvAB complex. HJ branch migration allows RuvC to scan DNA until it finds its consensus sequence, where it cleaves and resolves the cruciform DNA. This Prochlorococcus marinus subsp. pastoris (strain CCMP1986 / NIES-2087 / MED4) protein is Holliday junction branch migration complex subunit RuvA.